Reading from the N-terminus, the 336-residue chain is Inositol 2-dehydrogenase (336 aa).

Belongs to the Gfo/Idh/MocA family. Homotetramer.

It catalyses the reaction myo-inositol + NAD(+) = scyllo-inosose + NADH + H(+). Involved in the oxidation of myo-inositol (MI) to 2-keto-myo-inositol (2KMI or 2-inosose). The sequence is that of Inositol 2-dehydrogenase from Acidiphilium cryptum (strain JF-5).